We begin with the raw amino-acid sequence, 346 residues long: Inositol 2-dehydrogenase (346 aa).

It belongs to the Gfo/Idh/MocA family. Homotetramer.

It carries out the reaction myo-inositol + NAD(+) = scyllo-inosose + NADH + H(+). In terms of biological role, involved in the oxidation of myo-inositol (MI) to 2-keto-myo-inositol (2KMI or 2-inosose). This chain is Inositol 2-dehydrogenase, found in Rhodococcus erythropolis (strain PR4 / NBRC 100887).